Here is a 252-residue protein sequence, read N- to C-terminus: Carbohydrate deacetylase (252 aa).

Histidine 59 and histidine 122 together coordinate Mg(2+).

Belongs to the YdjC deacetylase family. Homodimer. It depends on Mg(2+) as a cofactor.

In terms of biological role, probably catalyzes the deacetylation of acetylated carbohydrates an important step in the degradation of oligosaccharides. The sequence is that of Carbohydrate deacetylase from Vibrio vulnificus (strain CMCP6).